We begin with the raw amino-acid sequence, 605 residues long: Dolichyl-diphosphooligosaccharide--protein glycosyltransferase subunit 1 (605 aa).

Residues 1 to 22 form the signal peptide; sequence MEAPIVLLLLLWLALAPTPGSA. Residues 23 to 437 lie on the Lumenal side of the membrane; that stretch reads SSEAPPLVNE…FNKVLMLQEP (415 aa). The residue at position 185 (K185) is an N6-acetyllysine. Residue N297 is glycosylated (N-linked (GlcNAc...) asparagine). A helical membrane pass occupies residues 438-455; that stretch reads LLVVAAFYILFFTVIIYV. At 456 to 605 the chain is on the cytoplasmic side; the sequence is RLDFSITKDP…TKIDHILDAL (150 aa). The residue at position 536 (K536) is an N6-acetyllysine; alternate. K536 is covalently cross-linked (Glycyl lysine isopeptide (Lys-Gly) (interchain with G-Cter in SUMO2); alternate).

This sequence belongs to the OST1 family. As to quaternary structure, component of the oligosaccharyltransferase (OST) complex. OST exists in two different complex forms which contain common core subunits RPN1, RPN2, OST48, OST4, DAD1 and TMEM258, either STT3A or STT3B as catalytic subunits, and form-specific accessory subunits. STT3A complex assembly occurs through the formation of 3 subcomplexes. Subcomplex 1 contains RPN1 and TMEM258, subcomplex 2 contains the STT3A-specific subunits STT3A, DC2/OSTC, and KCP2 as well as the core subunit OST4, and subcomplex 3 contains RPN2, DAD1, and OST48. The STT3A complex can form stable complexes with the Sec61 complex or with both the Sec61 and TRAP complexes. Interacts with TMEM35A/NACHO. Ubiquitinated by the ECS(ASB11) complex. Post-translationally, ufmylated by UFL1 in response to endoplasmic reticulum stress, promoting reticulophagy of endoplasmic reticulum sheets. In terms of tissue distribution, expressed in all tissues tested.

It is found in the endoplasmic reticulum membrane. The protein operates within protein modification; protein glycosylation. Subunit of the oligosaccharyl transferase (OST) complex that catalyzes the initial transfer of a defined glycan (Glc(3)Man(9)GlcNAc(2) in eukaryotes) from the lipid carrier dolichol-pyrophosphate to an asparagine residue within an Asn-X-Ser/Thr consensus motif in nascent polypeptide chains, the first step in protein N-glycosylation. N-glycosylation occurs cotranslationally and the complex associates with the Sec61 complex at the channel-forming translocon complex that mediates protein translocation across the endoplasmic reticulum (ER). All subunits are required for a maximal enzyme activity. This is Dolichyl-diphosphooligosaccharide--protein glycosyltransferase subunit 1 from Rattus norvegicus (Rat).